We begin with the raw amino-acid sequence, 1531 residues long: Protein turtle (1531 aa).

The Extracellular segment spans residues M1–T858. A disordered region spans residues Q19–K44. Ig-like C2-type domains lie at P132–T243, P253–I340, G344–S436, P440–D529, and P536–T624. 5 cysteine pairs are disulfide-bonded: C150/C227, C275/C324, C366/C419, C462/C513, and C558/C611. 2 consecutive Fibronectin type-III domains span residues Q632 to D728 and P760 to R851. The chain crosses the membrane as a helical span at residues A859–V879. The Cytoplasmic portion of the chain corresponds to K880–C1531. Disordered stretches follow at residues E1248–Q1269 and N1318–R1395. Positions S1333–S1349 are enriched in low complexity. Positions Q1380–G1389 are enriched in polar residues.

The protein belongs to the immunoglobulin superfamily. Turtle family. As to quaternary structure, interacts with bdl. As to expression, exclusively expressed in the central nervous system.

The protein resides in the membrane. Its function is as follows. Essential protein that plays a role in the establishment of coordinated motor control. In the developing eye, involved in axonal targeting of the R7 photoreceptor. The sequence is that of Protein turtle (tutl) from Drosophila melanogaster (Fruit fly).